Reading from the N-terminus, the 123-residue chain is Methanesulfonate monooxygenase ferredoxin subunit (123 aa).

In terms of domain architecture, Rieske spans threonine 4–alanine 99. Cysteine 43, histidine 45, cysteine 63, and histidine 66 together coordinate [2Fe-2S] cluster.

The protein belongs to the bacterial ring-hydroxylating dioxygenase ferredoxin component family. As to quaternary structure, the MSA monooxygenase system consists of 4 proteins: the 2 subunits of the hydroxylase component (MsmA and MsmB), a ferredoxin (MsmC) and a ferredoxin reductase (MsmD). The ferredoxin component is dimeric. It depends on [2Fe-2S] cluster as a cofactor.

The protein localises to the cytoplasm. It catalyses the reaction methanesulfonate + NADH + O2 = sulfite + formaldehyde + NAD(+) + H2O. MSAMO is inhibited by metal chelators (such as bathophenanthroline, bathocuprione, neocuprione, alpha-alpha-dipyridil and sodium EDTA) and by sodium azide, sodium arsenate and potassium cyanide. Its function is as follows. Methanesulfonate monooxygenase (MSAMO) mediates the primary degradation of methanesulfonic acid (MSA) to produce formaldehyd and inorganic sulfite by initial hydroxylation of the carbon atom prior to spontaneous cleavage of the unstable hydroxymethanesulfonic acid. MSAMO has a restricted substrate range that includes only the short-chain aliphatic sulfonates (methane- to butanesulfonate) and excludes all larger molecules, such as arylsulfonates and aromatic sulfonates. All MSAMO components are required for enzyme activity. This Methylosulfonomonas methylovora protein is Methanesulfonate monooxygenase ferredoxin subunit.